A 349-amino-acid polypeptide reads, in one-letter code: MKEVGIVGYGSDLPKYRIKAEDIAGAWGKDAQAIKRGLVVNEKSVPGPDEDTATISVQAARRALSRAGINPKDIGAVYVGSESHPYAVKPTSGIVAEACGVSPDFTAADLEFACKAGTAGMQMCMGLVGSEMMEYAMAVGADTAQGAPGDALEYTAAAGGAAYIIGAKKEEFIAKFNGTYSYTTDTPDFWRREHEHYPKHGGRFTGEPAYFKHVLNGAKGMMAKMDTTAKDYDYCVFHQPNGKFYISAAKQLGFTEEQYKYGLLTPYLGNTYSGAVPLGLSNILDHAKADDRIFVVSYGSGAGSDAFDITVSDRISEVVDKEITTEKLLESKKYVDYAVYLKYRGKIRM.

(3S)-3-hydroxy-3-methylglutaryl-CoA contacts are provided by aspartate 30 and alanine 31. The Proton donor/acceptor role is filled by glutamate 82. Residues cysteine 114 and threonine 155 each coordinate (3S)-3-hydroxy-3-methylglutaryl-CoA. Cysteine 114 (acyl-thioester intermediate) is an active-site residue. Position 203 (arginine 203) interacts with CoA. (3S)-3-hydroxy-3-methylglutaryl-CoA-binding residues include threonine 205 and histidine 238. Histidine 238 (proton donor/acceptor) is an active-site residue. Position 243 (lysine 243) interacts with CoA. Residues asparagine 270 and serine 300 each coordinate (3S)-3-hydroxy-3-methylglutaryl-CoA.

Belongs to the thiolase-like superfamily. Archaeal HMG-CoA synthase family. Interacts with acetoacetyl-CoA thiolase that catalyzes the precedent step in the pathway and with a DUF35 protein. The acetoacetyl-CoA thiolase/HMG-CoA synthase complex channels the intermediate via a fused CoA-binding site, which allows for efficient coupling of the endergonic thiolase reaction with the exergonic HMGCS reaction.

The enzyme catalyses acetoacetyl-CoA + acetyl-CoA + H2O = (3S)-3-hydroxy-3-methylglutaryl-CoA + CoA + H(+). It functions in the pathway metabolic intermediate biosynthesis; (R)-mevalonate biosynthesis; (R)-mevalonate from acetyl-CoA: step 2/3. Its function is as follows. Catalyzes the condensation of acetyl-CoA with acetoacetyl-CoA to form 3-hydroxy-3-methylglutaryl-CoA (HMG-CoA). Functions in the mevalonate (MVA) pathway leading to isopentenyl diphosphate (IPP), a key precursor for the biosynthesis of isoprenoid compounds that are building blocks of archaeal membrane lipids. In Methanococcus maripaludis (strain C5 / ATCC BAA-1333), this protein is Hydroxymethylglutaryl-CoA synthase.